The primary structure comprises 301 residues: Thiosulfate sulfurtransferase (301 aa).

2 consecutive Rhodanese domains span residues 31-138 and 171-289; these read GSPG…DTSY and QSGG…MPIE. Residue Cys-248 is the Cysteine persulfide intermediate of the active site. Arg-253 serves as a coordination point for substrate.

The enzyme catalyses thiosulfate + hydrogen cyanide = thiocyanate + sulfite + 2 H(+). This is Thiosulfate sulfurtransferase (thtR) from Corynebacterium glutamicum (strain ATCC 13032 / DSM 20300 / JCM 1318 / BCRC 11384 / CCUG 27702 / LMG 3730 / NBRC 12168 / NCIMB 10025 / NRRL B-2784 / 534).